The sequence spans 359 residues: Phosphoserine aminotransferase (359 aa).

Arg41 is an L-glutamate binding site. Pyridoxal 5'-phosphate is bound by residues 75-76, Trp101, Thr152, Asp171, and Gln194; that span reads AS. Lys195 bears the N6-(pyridoxal phosphate)lysine mark. 236–237 contacts pyridoxal 5'-phosphate; it reads NT.

Belongs to the class-V pyridoxal-phosphate-dependent aminotransferase family. SerC subfamily. Homodimer. It depends on pyridoxal 5'-phosphate as a cofactor.

Its subcellular location is the cytoplasm. The enzyme catalyses O-phospho-L-serine + 2-oxoglutarate = 3-phosphooxypyruvate + L-glutamate. The catalysed reaction is 4-(phosphooxy)-L-threonine + 2-oxoglutarate = (R)-3-hydroxy-2-oxo-4-phosphooxybutanoate + L-glutamate. It functions in the pathway amino-acid biosynthesis; L-serine biosynthesis; L-serine from 3-phospho-D-glycerate: step 2/3. The protein operates within cofactor biosynthesis; pyridoxine 5'-phosphate biosynthesis; pyridoxine 5'-phosphate from D-erythrose 4-phosphate: step 3/5. In terms of biological role, catalyzes the reversible conversion of 3-phosphohydroxypyruvate to phosphoserine and of 3-hydroxy-2-oxo-4-phosphonooxybutanoate to phosphohydroxythreonine. This Acinetobacter baylyi (strain ATCC 33305 / BD413 / ADP1) protein is Phosphoserine aminotransferase.